The chain runs to 396 residues: 3-amino-4-hydroxybenzoate 2-monooxygenase PtnB3 (396 aa).

FAD is bound by residues Ala-19, 38–39, and Arg-112; that span reads EQ. Tyr-217 functions as the Proton acceptor in the catalytic mechanism. Asp-295 is an FAD binding site.

It belongs to the 6-hydroxynicotinate 3-monooxygenase family. The cofactor is FAD.

It carries out the reaction 3-amino-4-hydroxybenzoate + NADPH + O2 + H(+) = 3-amino-2,4-dihydroxybenzoate + NADP(+) + H2O. The protein operates within antibiotic biosynthesis. In terms of biological role, part of a gene cluster involved in the biosynthesis of thioplatencin (ThioPTN) and platencin (PTN), potent and selective inhibitors of bacterial and mammalian fatty acid synthases. Catalyzes the hydroxylation of 3-amino-4-hydroxybenzoate (3,4-AHBA) to 3-amino-2,4-dihydroxybenzoate (3,2,4-ADHBA). The sequence is that of 3-amino-4-hydroxybenzoate 2-monooxygenase PtnB3 from Streptomyces platensis.